We begin with the raw amino-acid sequence, 341 residues long: Anthranilate phosphoribosyltransferase (341 aa).

5-phospho-alpha-D-ribose 1-diphosphate contacts are provided by residues G81, 84–85, T89, 91–94, 109–117, and S121; these read GD, NIST, and KHGSRSVSG. G81 contributes to the anthranilate binding site. S93 serves as a coordination point for Mg(2+). R167 contacts anthranilate. D226 and E227 together coordinate Mg(2+).

This sequence belongs to the anthranilate phosphoribosyltransferase family. As to quaternary structure, homodimer. The cofactor is Mg(2+).

It carries out the reaction N-(5-phospho-beta-D-ribosyl)anthranilate + diphosphate = 5-phospho-alpha-D-ribose 1-diphosphate + anthranilate. It functions in the pathway amino-acid biosynthesis; L-tryptophan biosynthesis; L-tryptophan from chorismate: step 2/5. Functionally, catalyzes the transfer of the phosphoribosyl group of 5-phosphorylribose-1-pyrophosphate (PRPP) to anthranilate to yield N-(5'-phosphoribosyl)-anthranilate (PRA). This is Anthranilate phosphoribosyltransferase from Methylococcus capsulatus (strain ATCC 33009 / NCIMB 11132 / Bath).